A 71-amino-acid polypeptide reads, in one-letter code: Conotoxin Tx11.3 (71 aa).

A signal peptide spans 1-19 (MKLCVTFLLVLVILPSVTG). A propeptide spanning residues 20 to 47 (VKSSERTLSGAALRGDRGTCSGRGQECK) is cleaved from the precursor. Disulfide bonds link C39–C53, C46–C58, C52–C63, and C57–C70.

It belongs to the I1 superfamily. As to expression, expressed by the venom duct.

The protein localises to the secreted. The protein is Conotoxin Tx11.3 of Conus textile (Cloth-of-gold cone).